A 215-amino-acid polypeptide reads, in one-letter code: Adenylate kinase (215 aa).

10 to 15 (GAGKGT) lines the ATP pocket. An NMP region spans residues 30-59 (STGDMLRAAVKAGTELGLIAKSVMDSGGLV). AMP-binding positions include T31, R36, 57–59 (GLV), 85–88 (GFPR), and Q92. Residues 122–159 (GRRVHEASGRVYHTVYNPPKVEGKDDVTGDDLVQRKDD) form an LID region. ATP contacts are provided by residues R123 and 132 to 133 (VY). AMP contacts are provided by R156 and R167. G201 is an ATP binding site.

The protein belongs to the adenylate kinase family. As to quaternary structure, monomer.

Its subcellular location is the cytoplasm. It catalyses the reaction AMP + ATP = 2 ADP. The protein operates within purine metabolism; AMP biosynthesis via salvage pathway; AMP from ADP: step 1/1. Functionally, catalyzes the reversible transfer of the terminal phosphate group between ATP and AMP. Plays an important role in cellular energy homeostasis and in adenine nucleotide metabolism. This chain is Adenylate kinase, found in Pseudomonas fluorescens (strain SBW25).